A 198-amino-acid chain; its full sequence is Glycerol-3-phosphate acyltransferase (198 aa).

The next 5 membrane-spanning stretches (helical) occupy residues 5–25, 56–76, 84–104, 114–134, and 158–178; these read LILL…LWIG, SIVT…PFFF, FWLL…FAGF, AGVI…IFLL, and LFMG…FVVW.

It belongs to the PlsY family. As to quaternary structure, probably interacts with PlsX.

Its subcellular location is the cell membrane. The catalysed reaction is an acyl phosphate + sn-glycerol 3-phosphate = a 1-acyl-sn-glycero-3-phosphate + phosphate. It functions in the pathway lipid metabolism; phospholipid metabolism. Its function is as follows. Catalyzes the transfer of an acyl group from acyl-phosphate (acyl-PO(4)) to glycerol-3-phosphate (G3P) to form lysophosphatidic acid (LPA). This enzyme utilizes acyl-phosphate as fatty acyl donor, but not acyl-CoA or acyl-ACP. The sequence is that of Glycerol-3-phosphate acyltransferase from Listeria welshimeri serovar 6b (strain ATCC 35897 / DSM 20650 / CCUG 15529 / CIP 8149 / NCTC 11857 / SLCC 5334 / V8).